The following is a 289-amino-acid chain: Phosphatidylglycerol--prolipoprotein diacylglyceryl transferase (289 aa).

7 consecutive transmembrane segments (helical) span residues 23 to 43 (ALHW…WLAV), 61 to 81 (LLYM…VLFY), 99 to 119 (GGMS…WFAH), 125 to 145 (FFQV…AGRL), 199 to 219 (SQLY…NLFI), 226 to 246 (GSVS…TEFF), and 259 to 279 (LFSM…LMMV). R144 provides a ligand contact to a 1,2-diacyl-sn-glycero-3-phospho-(1'-sn-glycerol).

It belongs to the Lgt family.

Its subcellular location is the cell inner membrane. The catalysed reaction is L-cysteinyl-[prolipoprotein] + a 1,2-diacyl-sn-glycero-3-phospho-(1'-sn-glycerol) = an S-1,2-diacyl-sn-glyceryl-L-cysteinyl-[prolipoprotein] + sn-glycerol 1-phosphate + H(+). It functions in the pathway protein modification; lipoprotein biosynthesis (diacylglyceryl transfer). In terms of biological role, catalyzes the transfer of the diacylglyceryl group from phosphatidylglycerol to the sulfhydryl group of the N-terminal cysteine of a prolipoprotein, the first step in the formation of mature lipoproteins. This Pectobacterium carotovorum subsp. carotovorum (strain PC1) protein is Phosphatidylglycerol--prolipoprotein diacylglyceryl transferase.